Here is a 172-residue protein sequence, read N- to C-terminus: uncharacterized protein (172 aa).

An HTH cro/C1-type domain is found at 21–75 (FKRILLELGLTLKEFSEISGIPYSTLYKVIQGKDFRVSTLIKILKTIRSFEKDEN). A DNA-binding region (H-T-H motif) is located at residues 32 to 51 (LKEFSEISGIPYSTLYKVIQ).

This is an uncharacterized protein from Methanocaldococcus jannaschii (strain ATCC 43067 / DSM 2661 / JAL-1 / JCM 10045 / NBRC 100440) (Methanococcus jannaschii).